The primary structure comprises 685 residues: Mesothelin-like protein (685 aa).

The first 32 residues, 1–32 (MSRTLRPSAMGSRVGALASPGLALLLSLTAHC), serve as a signal peptide directing secretion. Residues 33–627 (SGPQAKGLPK…GVSHTSGSPP (595 aa)) lie on the Extracellular side of the membrane. 2 N-linked (GlcNAc...) asparagine glycosylation sites follow: Asn-315 and Asn-400. Residues 603 to 624 (PPSSLIHSLDPPGNDGVSHTSG) are disordered. Residues 628-648 (VHLGYLSLAVALPSSLLWLLL) traverse the membrane as a helical segment. At 649–685 (CQLPSGQMATAHRTLGPMALAQGSWTPEHQIPEKRSC) the chain is on the cytoplasmic side.

This sequence belongs to the mesothelin family.

It is found in the membrane. In terms of biological role, may play a role in cellular adhesion. This Mus musculus (Mouse) protein is Mesothelin-like protein (Mslnl).